The sequence spans 280 residues: Ribosomal protein L11 methyltransferase (280 aa).

S-adenosyl-L-methionine contacts are provided by Thr131, Gly152, Asp174, and Asn217.

It belongs to the methyltransferase superfamily. PrmA family.

The protein localises to the cytoplasm. The catalysed reaction is L-lysyl-[protein] + 3 S-adenosyl-L-methionine = N(6),N(6),N(6)-trimethyl-L-lysyl-[protein] + 3 S-adenosyl-L-homocysteine + 3 H(+). Its function is as follows. Methylates ribosomal protein L11. This Bacteroides fragilis (strain ATCC 25285 / DSM 2151 / CCUG 4856 / JCM 11019 / LMG 10263 / NCTC 9343 / Onslow / VPI 2553 / EN-2) protein is Ribosomal protein L11 methyltransferase.